A 150-amino-acid chain; its full sequence is Large ribosomal subunit protein bL9 (150 aa).

This sequence belongs to the bacterial ribosomal protein bL9 family.

Binds to the 23S rRNA. The protein is Large ribosomal subunit protein bL9 of Serratia proteamaculans (strain 568).